Consider the following 620-residue polypeptide: Glutathione-regulated potassium-efflux system protein KefC (620 aa).

Helical transmembrane passes span 4–24 (HTLM…PIAV), 26–46 (LGLG…PWGL), 54–74 (SILH…GLEL), 90–110 (GALQ…FLGL), 114–134 (VAEL…MQAM), 149–169 (FAVL…IPLL), 178–198 (LGAF…VVLL), 218–238 (VFSA…EEVG), 270–290 (GLLL…GTLV), 294–314 (LRIL…LWLI), 327–347 (WFAV…GAAQ), and 359–379 (ALTL…VLLT). The RCK N-terminal domain occupies 399–518 (QPRVIVAGFG…AGVAMPERET (120 aa)). Positions 599–620 (QGTAEGKHTGDIADEPQVKPST) are disordered.

This sequence belongs to the monovalent cation:proton antiporter 2 (CPA2) transporter (TC 2.A.37) family. KefC subfamily. Homodimer. Interacts with the regulatory subunit KefF.

It localises to the cell inner membrane. Pore-forming subunit of a potassium efflux system that confers protection against electrophiles. Catalyzes K(+)/H(+) antiport. The sequence is that of Glutathione-regulated potassium-efflux system protein KefC from Salmonella arizonae (strain ATCC BAA-731 / CDC346-86 / RSK2980).